Reading from the N-terminus, the 71-residue chain is Protein DP71L (71 aa).

2 important for host CHOP inhibition regions span residues 16–18 and 57–61; these read VRF and LSAVL.

The protein belongs to the asfivirus DP71L family. In terms of assembly, interacts (via C-terminus) with host PPP1CB.

Functionally, interacts with the host phosphatase PP1 catalytic subunit (PPP1CB) and recruits it to dephosphorylate EIF2S1/eIF2alpha and therefore restores the host translation that has been shut-down by the host. Also inhibits the EIF2S1/eIF2alpha-ATF4-DDIT3/CHOP pathway. In Ornithodoros (relapsing fever ticks), this protein is Protein DP71L.